A 434-amino-acid chain; its full sequence is Putative DD-carboxypeptidase TP_0574 (434 aa).

A signal peptide spans 1–19 (MKVKYALLSAGALQLLVVG). Cysteine 20 carries the N-palmitoyl cysteine lipid modification. Residue cysteine 20 is the site of S-diacylglycerol cysteine attachment.

In terms of assembly, probably a monomer; a non-lipidated construct (residues 22-434) is monomeric in solution but crystallizes as a homodimer. It depends on Zn(2+) as a cofactor. The N-terminus is blocked. Present as a doublet of low abundance 48 kDa and high abundance 47 kDa proteins. The longer form is probably due to readthrough of the stop codon; the extra amino acids at the C-terminus would be X-Lys-Arg-Gly-Val-Leu-Ser-Arg-Val-Ser, a peptide antibody against this sequence detects only the 48 kDa form.

It is found in the cell inner membrane. In terms of biological role, a possible D,D-carboxypeptidase, that releases amino acids sequentially from a proteins C-terminus. Has zinc-dependent carboxypeptidase activity on synthetic depsipeptide substrates. May serve to decrease cross-linking of peptidoglycan, promoting the highly sinusous motility of this spirochaete. Overexpression of the whole protein in E.coli leads to aberrant cell morphology and extrusion of the cytoplasm, while overexpression of a construct with the first 62 resides of the protein fused to PhoA does have this effect, suggesting the whole protein, not the lipoprotein moiety, is toxic. Binds penicillin. Penicillin binding is covalent, does not require lipidation, and is zinc-dependent. While this protein has beta-lactamase activity in vitro, that is probably not its role in vivo, as T.pallidum is very sensitive to penicillin antibiotics. Functionally, a pathogen-specific membrane antigen. Most abundant of the membrane lipoproteins, only found in pathogenic treponemes, suggesting that it is an important structural moiety in the cell envelope of virulent treponemal subspecies. A lipopeptide corresponding to the first 6 mature residues induces host (human and mouse) cytokine release by monocyte cell lines via TLR2 and CD14; nonlipidated protein does not stimulate host cells. Stimulates host (human) dendritic cell maturation to become MHC class II-positive antigen presenting cells via TLR2, which depends on lipidation; nonlipidated protein does not stimulate maturation. The sequence is that of Putative DD-carboxypeptidase TP_0574 from Treponema pallidum (strain Nichols).